The chain runs to 29 residues: Cyclotide psyleio A (29 aa).

The cyclopeptide (Gly-Asp) cross-link spans Gly-1–Asp-29. Cystine bridges form between Cys-5/Cys-19, Cys-9/Cys-21, and Cys-14/Cys-26.

Post-translationally, this is a cyclic peptide.

In terms of biological role, probably participates in a plant defense mechanism. The polypeptide is Cyclotide psyleio A (Psychotria brachyceras).